Reading from the N-terminus, the 312-residue chain is Ribosomal RNA small subunit methyltransferase H (312 aa).

Residues 35-37, Asp55, Phe80, Asp102, and Gln109 contribute to the S-adenosyl-L-methionine site; that span reads GGH.

Belongs to the methyltransferase superfamily. RsmH family.

It is found in the cytoplasm. The enzyme catalyses cytidine(1402) in 16S rRNA + S-adenosyl-L-methionine = N(4)-methylcytidine(1402) in 16S rRNA + S-adenosyl-L-homocysteine + H(+). Functionally, specifically methylates the N4 position of cytidine in position 1402 (C1402) of 16S rRNA. The sequence is that of Ribosomal RNA small subunit methyltransferase H from Pseudoalteromonas translucida (strain TAC 125).